The primary structure comprises 98 residues: NADH-ubiquinone oxidoreductase chain 4L (98 aa).

3 helical membrane-spanning segments follow: residues 1–21, 29–49, and 61–81; these read MSLIYMNVMMAFTMSLTGLLM, ALLCMEGMMLSLFILAALTIL, and IILLVFAACEAAIGLALLVMI.

The protein belongs to the complex I subunit 4L family. In terms of assembly, core subunit of respiratory chain NADH dehydrogenase (Complex I) which is composed of 45 different subunits.

The protein localises to the mitochondrion inner membrane. The catalysed reaction is a ubiquinone + NADH + 5 H(+)(in) = a ubiquinol + NAD(+) + 4 H(+)(out). In terms of biological role, core subunit of the mitochondrial membrane respiratory chain NADH dehydrogenase (Complex I) which catalyzes electron transfer from NADH through the respiratory chain, using ubiquinone as an electron acceptor. Part of the enzyme membrane arm which is embedded in the lipid bilayer and involved in proton translocation. The sequence is that of NADH-ubiquinone oxidoreductase chain 4L (MT-ND4L) from Berardius bairdii (Baird's beaked whale).